Here is a 285-residue protein sequence, read N- to C-terminus: Probable fructose-bisphosphate aldolase (285 aa).

Residue serine 50 coordinates D-glyceraldehyde 3-phosphate. Aspartate 85 acts as the Proton donor in catalysis. Zn(2+) is bound by residues histidine 86, aspartate 107, glutamate 137, and histidine 181. Glycine 182 is a binding site for dihydroxyacetone phosphate. Residue histidine 209 participates in Zn(2+) binding. Residues 210–212 (GGT) and 231–234 (NVNT) contribute to the dihydroxyacetone phosphate site. A phosphothreonine mark is found at threonine 212 and threonine 234.

This sequence belongs to the class II fructose-bisphosphate aldolase family. Requires Zn(2+) as cofactor. In terms of processing, phosphorylated during sporulation.

The enzyme catalyses beta-D-fructose 1,6-bisphosphate = D-glyceraldehyde 3-phosphate + dihydroxyacetone phosphate. It functions in the pathway carbohydrate degradation; glycolysis; D-glyceraldehyde 3-phosphate and glycerone phosphate from D-glucose: step 4/4. Functionally, catalyzes the aldol condensation of dihydroxyacetone phosphate (DHAP or glycerone-phosphate) with glyceraldehyde 3-phosphate (G3P) to form fructose 1,6-bisphosphate (FBP) in gluconeogenesis and the reverse reaction in glycolysis. This is Probable fructose-bisphosphate aldolase (fbaA) from Bacillus subtilis (strain 168).